We begin with the raw amino-acid sequence, 89 residues long: Putative regulatory protein Dalk_1931 (89 aa).

It belongs to the RemA family.

This chain is Putative regulatory protein Dalk_1931, found in Desulfatibacillum aliphaticivorans.